The primary structure comprises 398 residues: Mu-type opioid receptor (398 aa).

Over 1 to 66 (MDSSAGPGNI…CPQTGSPSMV (66 aa)) the chain is Extracellular. N-linked (GlcNAc...) asparagine glycosylation is found at asparagine 9, asparagine 31, asparagine 38, and asparagine 46. The chain crosses the membrane as a helical span at residues 67–91 (TAITIMALYSIVCVVGLFGNFLVMY). Residues 92 to 104 (VIVRYTKMKTATN) lie on the Cytoplasmic side of the membrane. A helical transmembrane segment spans residues 105-129 (IYIFNLALADALATSTLPFQSVNYL). The Extracellular segment spans residues 130-140 (MGTWPFGNILC). A disulfide bridge links cysteine 140 with cysteine 217. A helical membrane pass occupies residues 141–163 (KIVISIDYYNMFTSIFTLCTMSV). At 164–183 (DRYIAVCHPVKALDFRTPRN) the chain is on the cytoplasmic side. Position 166 is a phosphotyrosine (tyrosine 166). Residues 184–205 (AKIVNVCNWILSSAIGLPVMFM) form a helical membrane-spanning segment. Residues 206–228 (ATTKYRQGSIDCTLTFSHPTWYW) are Extracellular-facing. A helical membrane pass occupies residues 229-253 (ENLLKICVFIFAFIMPVLIITVCYG). At 254 to 277 (LMILRLKSVRMLSGSKEKDRNLRR) the chain is on the cytoplasmic side. A helical transmembrane segment spans residues 278–304 (ITRMVLVVVAVFIVCWTPIHIYVIIKA). Topologically, residues 305–312 (LITIPETT) are extracellular. A helical transmembrane segment spans residues 313-336 (FQTVSWHFCIALGYTNSCLNPVLY). The short motif at 332-336 (NPVLY) is the NPxxY; plays a role in stabilizing the activated conformation of the receptor element. The Cytoplasmic portion of the chain corresponds to 337 to 398 (AFLDENFKRC…NLEAETAPLP (62 aa)). A lipid anchor (S-palmitoyl cysteine) is attached at cysteine 351. The interval 362–383 (NSARIRQNTREHPSTANTVDRT) is disordered. Serine 363 bears the Phosphoserine mark. Threonine 370 carries the phosphothreonine modification. Residue serine 375 is modified to Phosphoserine. Threonine 394 carries the phosphothreonine modification.

The protein belongs to the G-protein coupled receptor 1 family. As to quaternary structure, forms homooligomers and heterooligomers with other GPCRs, such as OPRD1, OPRK1, OPRL1, NPFFR2, ADRA2A, SSTR2, CNR1 and CCR5 (probably in dimeric forms). Interacts with heterotrimeric G proteins; interaction with a heterotrimeric complex containing GNAI1, GNB1 and GNG2 stabilizes the active conformation of the receptor and increases its affinity for endomorphin-2, the synthetic opioid peptide DAMGO and for morphinan agonists. Interacts with PPL; the interaction disrupts agonist-mediated G-protein activation. Interacts (via C-terminus) with DNAJB4 (via C-terminus). Interacts with calmodulin; the interaction inhibits the constitutive activity of OPRM1; it abolishes basal and attenuates agonist-stimulated G-protein coupling. Interacts with FLNA, PLD2, RANBP9 and WLS and GPM6A. Interacts with RTP4. Interacts with SYP and GNAS. Interacts with RGS9, RGS17, RGS20, RGS4, PPP1R9B and HINT1. Isoform 9 interacts with GRPR. Post-translationally, phosphorylated. Differentially phosphorylated in basal and agonist-induced conditions. Agonist-mediated phosphorylation modulates receptor internalization. Phosphorylated by GRK2 in a agonist-dependent manner. Phosphorylation at Tyr-166 requires receptor activation, is dependent on non-receptor protein tyrosine kinase Src and results in a decrease in agonist efficacy by reducing G-protein coupling efficiency. Phosphorylated on tyrosine residues; the phosphorylation is involved in agonist-induced G-protein-independent receptor down-regulation. Phosphorylation at Ser-375 is involved in G-protein-dependent but not beta-arrestin-dependent activation of the ERK pathway. Ubiquitinated. A basal ubiquitination seems not to be related to degradation. Ubiquitination is increased upon formation of OPRM1:OPRD1 oligomers leading to proteasomal degradation; the ubiquitination is diminished by RTP4.

Its subcellular location is the cell membrane. The protein resides in the cell projection. The protein localises to the axon. It is found in the perikaryon. It localises to the dendrite. Its subcellular location is the endosome. In terms of biological role, receptor for endogenous opioids such as beta-endorphin and endomorphin. Receptor for natural and synthetic opioids including morphine, heroin, DAMGO, fentanyl, etorphine, buprenorphin and methadone. Also activated by enkephalin peptides, such as Met-enkephalin or Met-enkephalin-Arg-Phe, with higher affinity for Met-enkephalin-Arg-Phe. Agonist binding to the receptor induces coupling to an inactive GDP-bound heterotrimeric G-protein complex and subsequent exchange of GDP for GTP in the G-protein alpha subunit leading to dissociation of the G-protein complex with the free GTP-bound G-protein alpha and the G-protein beta-gamma dimer activating downstream cellular effectors. The agonist- and cell type-specific activity is predominantly coupled to pertussis toxin-sensitive G(i) and G(o) G alpha proteins, GNAI1, GNAI2, GNAI3 and GNAO1 isoforms Alpha-1 and Alpha-2, and to a lesser extent to pertussis toxin-insensitive G alpha proteins GNAZ and GNA15. They mediate an array of downstream cellular responses, including inhibition of adenylate cyclase activity and both N-type and L-type calcium channels, activation of inward rectifying potassium channels, mitogen-activated protein kinase (MAPK), phospholipase C (PLC), phosphoinositide/protein kinase (PKC), phosphoinositide 3-kinase (PI3K) and regulation of NF-kappa-B. Also couples to adenylate cyclase stimulatory G alpha proteins. The selective temporal coupling to G-proteins and subsequent signaling can be regulated by RGSZ proteins, such as RGS9, RGS17 and RGS4. Phosphorylation by members of the GPRK subfamily of Ser/Thr protein kinases and association with beta-arrestins is involved in short-term receptor desensitization. Beta-arrestins associate with the GPRK-phosphorylated receptor and uncouple it from the G-protein thus terminating signal transduction. The phosphorylated receptor is internalized through endocytosis via clathrin-coated pits which involves beta-arrestins. The activation of the ERK pathway occurs either in a G-protein-dependent or a beta-arrestin-dependent manner and is regulated by agonist-specific receptor phosphorylation. Acts as a class A G-protein coupled receptor (GPCR) which dissociates from beta-arrestin at or near the plasma membrane and undergoes rapid recycling. Receptor down-regulation pathways are varying with the agonist and occur dependent or independent of G-protein coupling. Endogenous ligands induce rapid desensitization, endocytosis and recycling. Heterooligomerization with other GPCRs can modulate agonist binding, signaling and trafficking properties. Functionally, isoform 9 is involved in morphine-induced scratching and seems to cross-activate GRPR in response to morphine. In Mus musculus (Mouse), this protein is Mu-type opioid receptor (Oprm1).